We begin with the raw amino-acid sequence, 520 residues long: MSDDRKAIKRALISVYDKTGLEDLAQALHRENVEIVSTGSTAAKIAELGIPVTPVEELTGFPECLEGRVKTLHPKVHAGILADTRKEDHLRQLKELEVAPFQLVVVNLYPFAETVASGADFDACVEQIDIGGPSMVRAAAKNHPSVAVVVSPNRYEDVQEALKTGGFSRAERTKLAAEAFRHTATYDVTVATWMSEQLAAEDSETEFPGWIGTTNTLSRSLRYGENPHQSAALYVGNIRGLAQAKQFHGKEMSYNNYTDSDAAWRAAWDHERPCVAIIKHANPCGIAVSDESIAAAHREAHACDSVSAFGGVIASNREVSVEMANQVAEIFTEVIIAPSYEEGAVEILSQKKNIRILQAEAPVRKGFESREISGGLLVQERDLIHAEGDNSANWTLAAGSAVSPEVLKDLEFAWTAVRSVKSNAILLAKNGATVGVGMGQVNRVDSARLAVDRAGAERATGSVAASDAFFPFADGFEVLAEAGITAVVQPGGSIRDNEVIEAANKAGVTMYLTGARHFAH.

Positions 1-150 (MSDDRKAIKR…KNHPSVAVVV (150 aa)) constitute an MGS-like domain.

This sequence belongs to the PurH family.

It catalyses the reaction (6R)-10-formyltetrahydrofolate + 5-amino-1-(5-phospho-beta-D-ribosyl)imidazole-4-carboxamide = 5-formamido-1-(5-phospho-D-ribosyl)imidazole-4-carboxamide + (6S)-5,6,7,8-tetrahydrofolate. It carries out the reaction IMP + H2O = 5-formamido-1-(5-phospho-D-ribosyl)imidazole-4-carboxamide. It functions in the pathway purine metabolism; IMP biosynthesis via de novo pathway; 5-formamido-1-(5-phospho-D-ribosyl)imidazole-4-carboxamide from 5-amino-1-(5-phospho-D-ribosyl)imidazole-4-carboxamide (10-formyl THF route): step 1/1. It participates in purine metabolism; IMP biosynthesis via de novo pathway; IMP from 5-formamido-1-(5-phospho-D-ribosyl)imidazole-4-carboxamide: step 1/1. The sequence is that of Bifunctional purine biosynthesis protein PurH from Corynebacterium glutamicum (strain R).